The following is a 217-amino-acid chain: Large ribosomal subunit protein bL25 (217 aa).

Residues 185 to 217 are disordered; it reads TKETVEDEEAEEAAAEGAEETGETGETEEGGDE. A compositionally biased stretch (acidic residues) spans 189–217; it reads VEDEEAEEAAAEGAEETGETGETEEGGDE.

The protein belongs to the bacterial ribosomal protein bL25 family. CTC subfamily. As to quaternary structure, part of the 50S ribosomal subunit; part of the 5S rRNA/L5/L18/L25 subcomplex. Contacts the 5S rRNA. Binds to the 5S rRNA independently of L5 and L18.

Functionally, this is one of the proteins that binds to the 5S RNA in the ribosome where it forms part of the central protuberance. The protein is Large ribosomal subunit protein bL25 of Desulfosudis oleivorans (strain DSM 6200 / JCM 39069 / Hxd3) (Desulfococcus oleovorans).